Consider the following 188-residue polypeptide: Peptidyl-tRNA hydrolase (188 aa).

A tRNA-binding site is contributed by Tyr-14. The active-site Proton acceptor is the His-19. TRNA-binding residues include Tyr-64, Asn-66, and Asn-112.

The protein belongs to the PTH family. In terms of assembly, monomer.

Its subcellular location is the cytoplasm. The catalysed reaction is an N-acyl-L-alpha-aminoacyl-tRNA + H2O = an N-acyl-L-amino acid + a tRNA + H(+). Functionally, hydrolyzes ribosome-free peptidyl-tRNAs (with 1 or more amino acids incorporated), which drop off the ribosome during protein synthesis, or as a result of ribosome stalling. Its function is as follows. Catalyzes the release of premature peptidyl moieties from peptidyl-tRNA molecules trapped in stalled 50S ribosomal subunits, and thus maintains levels of free tRNAs and 50S ribosomes. The polypeptide is Peptidyl-tRNA hydrolase (Bacillus velezensis (strain DSM 23117 / BGSC 10A6 / LMG 26770 / FZB42) (Bacillus amyloliquefaciens subsp. plantarum)).